Consider the following 1481-residue polypeptide: Cystic fibrosis transmembrane conductance regulator (1481 aa).

The Cytoplasmic segment spans residues 1–77 (MQRSPLEKAS…KLINALRRCF (77 aa)). The chain crosses the membrane as a helical span at residues 78–98 (FWRFMFYGIILYLGEVTKAVQ). Residues 81–365 (FMFYGIILYL…WAVQTWYDSL (285 aa)) enclose the ABC transmembrane type-1 1 domain. Residues 99–122 (PLLLGRIIASYDPDNKVERSIAIY) are Extracellular-facing. A helical membrane pass occupies residues 123–146 (LGIGLCLLFIVRTLLLHPAIFGLH). At 147 to 195 (HIGMQMRIAMFSLIYKKTLKLSSRVLDKISIGQLVSLLSNNLNKFDEGL) the chain is on the cytoplasmic side. A helical membrane pass occupies residues 196–216 (ALAHFVWIAPLQVTLLMGLLW). Over 217-222 (DLLQAF) the chain is Extracellular. A helical membrane pass occupies residues 223 to 243 (TFCGLAFLVVLALLQAGLGKM). The Cytoplasmic portion of the chain corresponds to 244–298 (MMKYRDQRAGKINERLVITSEMIENIQSVKAYCWEEAMEKIIENLRQTELKLTRK). The helical transmembrane segment at 299–319 (AAYVRYLNSSAFFFSGFFVVF) threads the bilayer. The Extracellular portion of the chain corresponds to 320 to 339 (LSVLPYALLKGIILRKIFTT). Residues 340–358 (ISFCIVLRMAVTRQFPWAV) form a helical membrane-spanning segment. Over 359-858 (QTWYDSLGAI…YLRYITVHKS (500 aa)) the chain is Cytoplasmic. ATP is bound by residues Trp-401, 457-464 (GSTGAGKT), and Gln-492. The ABC transporter 1 domain maps to 421 to 645 (ISNCDTSLFF…RPDFSSKLMG (225 aa)). Residue Cys-523 is the site of S-palmitoyl cysteine attachment. Phosphoserine is present on residues Ser-548 and Ser-659. The disordered R region stretch occupies residues 653-831 (TAERRNSIIT…EEINEEDLRD (179 aa)). Phosphoserine; by PKA is present on Ser-669. At Ser-685 the chain carries Phosphoserine. Residue Lys-687 forms a Glycyl lysine isopeptide (Lys-Gly) (interchain with G-Cter in ubiquitin) linkage. 2 positions are modified to phosphoserine: Ser-699 and Ser-711. A Phosphothreonine modification is found at Thr-716. Phosphoserine occurs at positions 736, 767, 790, 795, and 813. A helical membrane pass occupies residues 859 to 879 (LMFVLIWCLVVFLVEVAASLV). Positions 859–1155 (LMFVLIWCLV…AVNSSIDVDS (297 aa)) constitute an ABC transmembrane type-1 2 domain. The Extracellular portion of the chain corresponds to 880–918 (VLCLFPKILLQDKGNSTKNASNSYAVIITSTSSYYIFYI). Asn-894 and Asn-898 each carry an N-linked (GlcNAc...) asparagine glycan. A discontinuously helical transmembrane segment spans residues 919-939 (YVGVADTLLALGLFRGLPLVH). Over 940–990 (TLITVSKTLHHKMLQSVLQAPMSTLNTLKTGGILNRFSKDIAVLDDLLPLT) the chain is Cytoplasmic. Residues 991–1011 (IFDFIQLLLIVIGAVVVVSVL) traverse the membrane as a helical segment. Residues 1012–1013 (QP) lie on the Extracellular side of the membrane. The helical transmembrane segment at 1014–1034 (YIFLATVPVIAAFILLRGYFL) threads the bilayer. The Cytoplasmic portion of the chain corresponds to 1035–1095 (HTSQQLKQLE…TANWFLYLST (61 aa)). Residues 1096–1116 (LRWFQMRIEMIFVIFFIAVTF) form a helical membrane-spanning segment. The Extracellular portion of the chain corresponds to 1117–1130 (ISILTTGEGEGRVG). Residues 1131 to 1151 (IILTLAMNIMGTLQWAVNSSI) form a helical membrane-spanning segment. At 1152–1481 (DVDSLMRSVS…TEEEVQETKL (330 aa)) the chain is on the cytoplasmic side. One can recognise an ABC transporter 2 domain in the interval 1211 to 1444 (MTVKDLTAKY…KSLFRQAISP (234 aa)). ATP contacts are provided by residues Tyr-1220 and 1245-1252 (GRTGSGKS). The interval 1387 to 1481 (RTLKQAFADC…TEEEVQETKL (95 aa)) is interaction with GORASP2. Cys-1396 carries S-palmitoyl cysteine lipidation. Ser-1457 is subject to Phosphoserine. Positions 1479 to 1481 (TKL) match the PDZ-binding motif.

This sequence belongs to the ABC transporter superfamily. ABCC family. CFTR transporter (TC 3.A.1.202) subfamily. In terms of assembly, monomer; does not require oligomerization for channel activity. May form oligomers in the membrane. Interacts with SLC26A3, SLC26A6 and NHERF1. Interacts with SHANK2. Interacts with MYO6. Interacts (via C-terminus) with GOPC (via PDZ domain); this promotes CFTR internalization and thereby decreases channel activity. Interacts with SLC4A7 through NHERF1. Found in a complex with MYO5B and RAB11A. Interacts with ANO1. Interacts with SLC26A8. Interacts with AHCYL1; the interaction increases CFTR activity. Interacts with CSE1L. The core-glycosylated form interacts with GORASP2 (via PDZ GRASP-type 1 domain) in respone to ER stress. Interacts with MARCHF2; the interaction leads to CFTR ubiqtuitination and degradation. Interacts with ADGRG2. Post-translationally, N-glycosylated. In terms of processing, phosphorylated; cAMP treatment promotes phosphorylation and activates the channel. Dephosphorylation decreases the ATPase activity (in vitro). Phosphorylation at PKA sites activates the channel. Phosphorylation at PKC sites enhances the response to phosphorylation by PKA. Phosphorylated by AMPK; this inhibits channel activity. Ubiquitinated, leading to its degradation in the lysosome. Deubiquitination by USP10 in early endosomes enhances its endocytic recycling to the cell membrane. Ubiquitinated by RNF185 during ER stress. Ubiquitinated by MARCHF2.

The protein localises to the apical cell membrane. It is found in the early endosome membrane. It localises to the cell membrane. The protein resides in the recycling endosome membrane. Its subcellular location is the endoplasmic reticulum membrane. The protein localises to the nucleus. It carries out the reaction ATP + H2O + closed Cl(-) channel = ADP + phosphate + open Cl(-) channel.. It catalyses the reaction chloride(in) = chloride(out). The enzyme catalyses hydrogencarbonate(in) = hydrogencarbonate(out). The catalysed reaction is ATP + H2O = ADP + phosphate + H(+). Epithelial ion channel that plays an important role in the regulation of epithelial ion and water transport and fluid homeostasis. Mediates the transport of chloride ions across the cell membrane. Possesses an intrinsic ATPase activity and utilizes ATP to gate its channel; the passive flow of anions through the channel is gated by cycles of ATP binding and hydrolysis by the ATP-binding domains. The ion channel is also permeable to HCO(3)(-); selectivity depends on the extracellular chloride concentration. Exerts its function also by modulating the activity of other ion channels and transporters. Contributes to the regulation of the pH and the ion content of the epithelial fluid layer. Modulates the activity of the epithelial sodium channel (ENaC) complex, in part by regulating the cell surface expression of the ENaC complex. May regulate bicarbonate secretion and salvage in epithelial cells by regulating the transporter SLC4A7. Can inhibit the chloride channel activity of ANO1. Plays a role in the chloride and bicarbonate homeostasis during sperm epididymal maturation and capacitation. The polypeptide is Cystic fibrosis transmembrane conductance regulator (Ovis aries (Sheep)).